The sequence spans 350 residues: S-adenosylmethionine:tRNA ribosyltransferase-isomerase (350 aa).

It belongs to the QueA family. Monomer.

The protein resides in the cytoplasm. The enzyme catalyses 7-aminomethyl-7-carbaguanosine(34) in tRNA + S-adenosyl-L-methionine = epoxyqueuosine(34) in tRNA + adenine + L-methionine + 2 H(+). Its pathway is tRNA modification; tRNA-queuosine biosynthesis. Its function is as follows. Transfers and isomerizes the ribose moiety from AdoMet to the 7-aminomethyl group of 7-deazaguanine (preQ1-tRNA) to give epoxyqueuosine (oQ-tRNA). This is S-adenosylmethionine:tRNA ribosyltransferase-isomerase from Bacillus cytotoxicus (strain DSM 22905 / CIP 110041 / 391-98 / NVH 391-98).